Here is a 377-residue protein sequence, read N- to C-terminus: Nitric oxide reductase FlRd-NAD(+) reductase (377 aa).

It belongs to the FAD-dependent oxidoreductase family. It depends on FAD as a cofactor.

It localises to the cytoplasm. The catalysed reaction is 2 reduced [nitric oxide reductase rubredoxin domain] + NAD(+) + H(+) = 2 oxidized [nitric oxide reductase rubredoxin domain] + NADH. It functions in the pathway nitrogen metabolism; nitric oxide reduction. Its function is as follows. One of at least two accessory proteins for anaerobic nitric oxide (NO) reductase. Reduces the rubredoxin moiety of NO reductase. The chain is Nitric oxide reductase FlRd-NAD(+) reductase from Escherichia coli (strain SE11).